Here is a 318-residue protein sequence, read N- to C-terminus: Isoflavone reductase (318 aa).

NADP(+)-binding positions include 11-17 (GPTGAIG), Arg-36, and Lys-44. Lys-144 functions as the Proton acceptor in the catalytic mechanism. NADP(+) is bound at residue Arg-148.

The protein belongs to the NmrA-type oxidoreductase family. Isoflavone reductase subfamily.

The catalysed reaction is (3R)-vestitone + NADP(+) = 2'-hydroxyformononetin + NADPH + 2 H(+). It functions in the pathway phytoalexin biosynthesis; pterocarpan phytoalexin biosynthesis. In terms of biological role, reduces achiral isoflavones to chiral isoflavanones during the biosynthesis of chiral pterocarpan phytoalexins. This chain is Isoflavone reductase (IFR), found in Cicer arietinum (Chickpea).